Consider the following 217-residue polypeptide: Probable transaldolase (217 aa).

Lys83 acts as the Schiff-base intermediate with substrate in catalysis.

Belongs to the transaldolase family. Type 3B subfamily.

It is found in the cytoplasm. It catalyses the reaction D-sedoheptulose 7-phosphate + D-glyceraldehyde 3-phosphate = D-erythrose 4-phosphate + beta-D-fructose 6-phosphate. The protein operates within carbohydrate degradation; pentose phosphate pathway; D-glyceraldehyde 3-phosphate and beta-D-fructose 6-phosphate from D-ribose 5-phosphate and D-xylulose 5-phosphate (non-oxidative stage): step 2/3. Transaldolase is important for the balance of metabolites in the pentose-phosphate pathway. The sequence is that of Probable transaldolase from Bartonella quintana (strain Toulouse) (Rochalimaea quintana).